A 356-amino-acid polypeptide reads, in one-letter code: Phospho-2-dehydro-3-deoxyheptonate aldolase, Tyr-sensitive (356 aa).

It belongs to the class-I DAHP synthase family.

The enzyme catalyses D-erythrose 4-phosphate + phosphoenolpyruvate + H2O = 7-phospho-2-dehydro-3-deoxy-D-arabino-heptonate + phosphate. Its pathway is metabolic intermediate biosynthesis; chorismate biosynthesis; chorismate from D-erythrose 4-phosphate and phosphoenolpyruvate: step 1/7. Stereospecific condensation of phosphoenolpyruvate (PEP) and D-erythrose-4-phosphate (E4P) giving rise to 3-deoxy-D-arabino-heptulosonate-7-phosphate (DAHP). The sequence is that of Phospho-2-dehydro-3-deoxyheptonate aldolase, Tyr-sensitive (aroF) from Salmonella typhi.